We begin with the raw amino-acid sequence, 1199 residues long: DNA-directed RNA polymerase subunit beta' (1199 aa).

Positions 60, 62, 75, and 78 each coordinate Zn(2+). Mg(2+) contacts are provided by D449, D451, and D453. The Zn(2+) site is built by C818, C892, C899, and C902.

Belongs to the RNA polymerase beta' chain family. In terms of assembly, the RNAP catalytic core consists of 2 alpha, 1 beta, 1 beta' and 1 omega subunit. When a sigma factor is associated with the core the holoenzyme is formed, which can initiate transcription. Mg(2+) is required as a cofactor. It depends on Zn(2+) as a cofactor.

The enzyme catalyses RNA(n) + a ribonucleoside 5'-triphosphate = RNA(n+1) + diphosphate. In terms of biological role, DNA-dependent RNA polymerase catalyzes the transcription of DNA into RNA using the four ribonucleoside triphosphates as substrates. In Bacillus licheniformis (strain ATCC 14580 / DSM 13 / JCM 2505 / CCUG 7422 / NBRC 12200 / NCIMB 9375 / NCTC 10341 / NRRL NRS-1264 / Gibson 46), this protein is DNA-directed RNA polymerase subunit beta'.